Reading from the N-terminus, the 318-residue chain is Lymphatic vessel endothelial hyaluronic acid receptor 1 (318 aa).

The N-terminal stretch at 1–23 (MLQHTSLVLLLASIWTTRHPVQG) is a signal peptide. Residues 24–234 (ADLVQDLSIS…EAAGFGGVPT (211 aa)) are Extracellular-facing. The Link domain occupies 39 to 129 (GVALVGRNKN…SQKFKAYCHN (91 aa)). Residue Asn52 is glycosylated (N-linked (GlcNAc...) asparagine). Intrachain disulfides connect Cys60/Cys127 and Cys84/Cys105. Asn129 carries N-linked (GlcNAc...) asparagine glycosylation. A helical membrane pass occupies residues 235 to 255 (ALLVLALLFFGAAAVLAVCYV). The Cytoplasmic portion of the chain corresponds to 256-318 (KRYVKAFPFT…TTVRCLEAEV (63 aa)). A compositionally biased stretch (basic and acidic residues) spans 284 to 305 (ADDVNANEESKKTIKNPEEAKS). The interval 284-318 (ADDVNANEESKKTIKNPEEAKSPPKTTVRCLEAEV) is disordered.

As to quaternary structure, homodimer; disulfide-linked. Interacts with PDGFB and IGFBP3. Forms a transient ternary complex with PDGFB and PDGFRB in TGN. O-glycosylated.

It is found in the membrane. Functionally, ligand-specific transporter trafficking between intracellular organelles (TGN) and the plasma membrane. Plays a role in autocrine regulation of cell growth mediated by growth regulators containing cell surface retention sequence binding (CRS). May act as a hyaluronan (HA) transporter, either mediating its uptake for catabolism within lymphatic endothelial cells themselves, or its transport into the lumen of afferent lymphatic vessels for subsequent re-uptake and degradation in lymph nodes. Binds to pericelluar hyaluronan matrices deposited on the surface of leukocytes and facilitates cell adhesion and migration through lymphatic endothelium. The polypeptide is Lymphatic vessel endothelial hyaluronic acid receptor 1 (Lyve1) (Mus musculus (Mouse)).